We begin with the raw amino-acid sequence, 492 residues long: Alpha-2-antiplasmin (492 aa).

A signal peptide spans 1–22 (MALLWGLLALILSCLSSLCSAQ). The propeptide occupies 23–40 (FSPVSTMEPLDLQLMDGQ). The segment at 56–76 (QEPGGQIAPKKAPEDCKLSPT) is disordered. Cysteines 71 and 144 form a disulfide. N-linked (GlcNAc...) asparagine glycosylation is found at Asn-127, Asn-249, Asn-296, Asn-310, and Asn-317. The segment at 433–492 (SVRNPNPGAQPERKEQQDSPDGKDSFQDHKGLPRGDKPFDPDLKLGPPSEEDYAQPSSPK) is disordered. Basic and acidic residues predominate over residues 443-475 (PERKEQQDSPDGKDSFQDHKGLPRGDKPFDPDL). A Sulfotyrosine modification is found at Tyr-485.

The protein belongs to the serpin family. Forms protease inhibiting heterodimer with TMPRSS7. Proteolytically cleaved at Pro-31 by both the prolyl endopeptidase FAP form and antiplasmin-cleaving enzyme FAP soluble form to generate mature alpha-2-antiplasmin. Expressed by the liver and secreted in plasma.

Its subcellular location is the secreted. In terms of biological role, serine protease inhibitor. The major targets of this inhibitor are plasmin and trypsin, but it also inactivates matriptase-3/TMPRSS7 and chymotrypsin. This chain is Alpha-2-antiplasmin (SERPINF2), found in Bos taurus (Bovine).